The primary structure comprises 31 residues: Palustrin-2c (31 aa).

An intrachain disulfide couples C23 to C29.

As to expression, expressed by the skin glands.

The protein localises to the secreted. Functionally, antimicrobial activity against Gram-negative bacterium E.coli. The sequence is that of Palustrin-2c from Lithobates palustris (Pickerel frog).